The primary structure comprises 233 residues: Small ribosomal subunit protein uS3 (233 aa).

One can recognise a KH type-2 domain in the interval 39–107 (VRQFLMKTLE…PVQINISEVR (69 aa)).

It belongs to the universal ribosomal protein uS3 family. In terms of assembly, part of the 30S ribosomal subunit. Forms a tight complex with proteins S10 and S14.

Its function is as follows. Binds the lower part of the 30S subunit head. Binds mRNA in the 70S ribosome, positioning it for translation. The sequence is that of Small ribosomal subunit protein uS3 from Buchnera aphidicola subsp. Acyrthosiphon pisum (strain APS) (Acyrthosiphon pisum symbiotic bacterium).